We begin with the raw amino-acid sequence, 309 residues long: Aromatic prenyltransferase (309 aa).

The protein belongs to the aromatic prenyltransferase family.

Functionally, prenyltransferase that attaches isoprenoid moieties to carbon atoms of aromatic substrates in an enzyme-catalyzed Friedel-Crafts reaction. Shows specificity for dimethylallyl diphosphate (DMAPP) and does not accept geranyl diphosphate (GPP) or isopentenyl diphosphate (IPP). Prenylates the artificial substrate 2,7-dihydroxynaphthalene (2,7-DHN), as well as dihydrophenazine-1-carboxylic acid and 4-hydroxybenzoic acid at lower levels. Only traces of products are detected with aspulvinone E or flaviolin as substrates; and no product is formed with L-tryptophan, L-tyrosine, or 4-hydroxyphenylpyruvate. Ptf seems no to be involved in the prenylation reaction in the biosynthesis of aspulvinone H and J and the physiological function of ptf remains unknown. This is Aromatic prenyltransferase from Sclerotinia sclerotiorum (strain ATCC 18683 / 1980 / Ss-1) (White mold).